The sequence spans 277 residues: Large ribosomal subunit protein uL2 (277 aa).

Positions 219 to 277 (TVRGSVMNPNDHPHGGGEGRSPIGHPSPRTPWGKPALGYKTRKNKKYSDRFIVKRRHDK) are disordered.

This sequence belongs to the universal ribosomal protein uL2 family. In terms of assembly, part of the 50S ribosomal subunit. Forms a bridge to the 30S subunit in the 70S ribosome.

In terms of biological role, one of the primary rRNA binding proteins. Required for association of the 30S and 50S subunits to form the 70S ribosome, for tRNA binding and peptide bond formation. It has been suggested to have peptidyltransferase activity; this is somewhat controversial. Makes several contacts with the 16S rRNA in the 70S ribosome. This chain is Large ribosomal subunit protein uL2, found in Clostridium botulinum (strain 657 / Type Ba4).